The chain runs to 243 residues: 3-deoxy-manno-octulosonate cytidylyltransferase (243 aa).

It belongs to the KdsB family.

The protein resides in the cytoplasm. It carries out the reaction 3-deoxy-alpha-D-manno-oct-2-ulosonate + CTP = CMP-3-deoxy-beta-D-manno-octulosonate + diphosphate. The protein operates within nucleotide-sugar biosynthesis; CMP-3-deoxy-D-manno-octulosonate biosynthesis; CMP-3-deoxy-D-manno-octulosonate from 3-deoxy-D-manno-octulosonate and CTP: step 1/1. It participates in bacterial outer membrane biogenesis; lipopolysaccharide biosynthesis. Functionally, activates KDO (a required 8-carbon sugar) for incorporation into bacterial lipopolysaccharide in Gram-negative bacteria. This chain is 3-deoxy-manno-octulosonate cytidylyltransferase, found in Bartonella quintana (strain Toulouse) (Rochalimaea quintana).